Here is a 188-residue protein sequence, read N- to C-terminus: Elongation factor P (188 aa).

Belongs to the elongation factor P family.

The protein localises to the cytoplasm. The protein operates within protein biosynthesis; polypeptide chain elongation. Its function is as follows. Involved in peptide bond synthesis. Stimulates efficient translation and peptide-bond synthesis on native or reconstituted 70S ribosomes in vitro. Probably functions indirectly by altering the affinity of the ribosome for aminoacyl-tRNA, thus increasing their reactivity as acceptors for peptidyl transferase. The protein is Elongation factor P of Cereibacter sphaeroides (strain KD131 / KCTC 12085) (Rhodobacter sphaeroides).